A 61-amino-acid polypeptide reads, in one-letter code: MTKRVRITLVRSTIGQREPVRRTVRSLGLRKLHSMVEKDGSPAVLGMVRAVSHLVRVEELG.

It belongs to the universal ribosomal protein uL30 family. In terms of assembly, part of the 50S ribosomal subunit.

The chain is Large ribosomal subunit protein uL30 from Treponema pallidum subsp. pallidum (strain SS14).